Consider the following 404-residue polypeptide: Argininosuccinate synthase (404 aa).

ATP is bound at residue 9–17; the sequence is AYSGGLDTS. L-citrulline is bound at residue Tyr86. Residue Gly116 participates in ATP binding. The L-aspartate site is built by Thr118, Asn122, and Asp123. Asn122 serves as a coordination point for L-citrulline. L-citrulline-binding residues include Arg126, Ser174, Ser183, Glu259, and Tyr271.

Belongs to the argininosuccinate synthase family. Type 1 subfamily. In terms of assembly, homotetramer.

Its subcellular location is the cytoplasm. The enzyme catalyses L-citrulline + L-aspartate + ATP = 2-(N(omega)-L-arginino)succinate + AMP + diphosphate + H(+). It functions in the pathway amino-acid biosynthesis; L-arginine biosynthesis; L-arginine from L-ornithine and carbamoyl phosphate: step 2/3. The sequence is that of Argininosuccinate synthase from Listeria monocytogenes serotype 4b (strain CLIP80459).